The primary structure comprises 179 residues: Replication restart protein DnaT (179 aa).

Residues 151 to 179 are disordered; that stretch reads SRASNGGQPKRDVNSVSEPDSHIPRGFRG. Positions 159 to 173 are enriched in basic and acidic residues; it reads PKRDVNSVSEPDSHI.

It belongs to the DnaT family. As to quaternary structure, homooligomerizes. Interacts with PriB. Component of the replication restart primosome. Primosome assembly occurs via a 'hand-off' mechanism. PriA binds to replication forks, subsequently PriB then DnaT bind; DnaT then displaces ssDNA to generate the helicase loading substrate.

Involved in the restart of stalled replication forks, which reloads the replicative helicase on sites other than the origin of replication. Can function in multiple replication restart pathways. Displaces ssDNA from a PriB-ssDNA complex. Probably forms a spiral filament on ssDNA. The chain is Replication restart protein DnaT from Klebsiella pneumoniae (strain 342).